A 259-amino-acid polypeptide reads, in one-letter code: Global transcriptional regulator CodY (259 aa).

The GAF domain stretch occupies residues 1-155 (MELLAKTRKL…SSTVVGMEIL (155 aa)). Positions 203–222 (ASKIADRVGITRSVIVNALR) form a DNA-binding region, H-T-H motif. Ser-215 carries the post-translational modification Phosphoserine.

Belongs to the CodY family.

The protein localises to the cytoplasm. Its function is as follows. DNA-binding global transcriptional regulator which is involved in the adaptive response to starvation and acts by directly or indirectly controlling the expression of numerous genes in response to nutrient availability. During rapid exponential growth, CodY is highly active and represses genes whose products allow adaptation to nutrient depletion. In Bacillus anthracis (strain A0248), this protein is Global transcriptional regulator CodY.